A 232-amino-acid polypeptide reads, in one-letter code: 5'-methylthioadenosine/S-adenosylhomocysteine nucleosidase (232 aa).

Residue E12 is the Proton acceptor of the active site. Substrate is bound by residues G78, I152, and 173–174 (ME). Catalysis depends on D197, which acts as the Proton donor.

The protein belongs to the PNP/UDP phosphorylase family. MtnN subfamily. Homodimer.

It catalyses the reaction S-adenosyl-L-homocysteine + H2O = S-(5-deoxy-D-ribos-5-yl)-L-homocysteine + adenine. The enzyme catalyses S-methyl-5'-thioadenosine + H2O = 5-(methylsulfanyl)-D-ribose + adenine. It carries out the reaction 5'-deoxyadenosine + H2O = 5-deoxy-D-ribose + adenine. Its pathway is amino-acid biosynthesis; L-methionine biosynthesis via salvage pathway; S-methyl-5-thio-alpha-D-ribose 1-phosphate from S-methyl-5'-thioadenosine (hydrolase route): step 1/2. Its function is as follows. Catalyzes the irreversible cleavage of the glycosidic bond in both 5'-methylthioadenosine (MTA) and S-adenosylhomocysteine (SAH/AdoHcy) to adenine and the corresponding thioribose, 5'-methylthioribose and S-ribosylhomocysteine, respectively. Also cleaves 5'-deoxyadenosine, a toxic by-product of radical S-adenosylmethionine (SAM) enzymes, into 5-deoxyribose and adenine. Thus, is required for in vivo function of the radical SAM enzymes biotin synthase and lipoic acid synthase, that are inhibited by 5'-deoxyadenosine accumulation. The protein is 5'-methylthioadenosine/S-adenosylhomocysteine nucleosidase of Escherichia coli O9:H4 (strain HS).